The chain runs to 1547 residues: Transposon Ty3-G Gag-Pol polyprotein (1547 aa).

An N-acetylserine modification is found at Ser-2. A CCHC-type zinc finger spans residues 265–282; that stretch reads RLCFYCKKEGHRLNECRA. Catalysis depends on Asp-336, which acts as the For protease activity; shared with dimeric partner. One can recognise a Reverse transcriptase domain in the interval 620–797; sequence LDNKFIVPSK…EETEFLGYSI (178 aa). Mg(2+) contacts are provided by Asp-686, Asp-748, Asp-749, Asp-893, Glu-936, and Asp-961. An RNase H Ty3/gyspy-type domain is found at 893–1011; sequence DASKDGIGAV…VADAISRAVY (119 aa). Residues 1106–1145 form an integrase-type zinc finger-like region; that stretch reads HTLFGGHFGVTVTLAKISPIYYWPKLQHSIIQYIRTCVQC. The region spanning 1159–1324 is the Integrase catalytic domain; it reads LQPLPIAEGR…SPFEIDLGYL (166 aa). Mg(2+) is bound by residues Asp-1175 and Asp-1236.

In terms of assembly, the protease is a homodimer, whose active site consists of two apposed aspartic acid residues. In terms of processing, initially, virus-like particles (VLPs) are composed of the structural unprocessed proteins Gag and Gag-Pol, and also contain the host initiator methionine tRNA (tRNA(i)-Met) which serves as a primer for minus-strand DNA synthesis, and a dimer of genomic Ty RNA. Processing of the polyproteins occurs within the particle and proceeds by an ordered pathway, called maturation. First, the protease (PR) is released by autocatalytic cleavage of the Gag-Pol polyprotein, and this cleavage is a prerequisite for subsequent processing at the remaining sites to release the mature structural and catalytic proteins. Maturation takes place prior to the RT reaction and is required to produce transposition-competent VLPs.

Its subcellular location is the cytoplasm. The protein resides in the nucleus. The catalysed reaction is DNA(n) + a 2'-deoxyribonucleoside 5'-triphosphate = DNA(n+1) + diphosphate. The enzyme catalyses Endonucleolytic cleavage to 5'-phosphomonoester.. Its function is as follows. Capsid protein (CA) is the structural component of the virus-like particle (VLP), forming the shell that encapsulates the genomic RNA-nucleocapsid complex. Functionally, nucleocapsid protein p11 (NC) forms the nucleocore that coats the retro-elements dimeric RNA. Binds these RNAs through its zinc fingers. Promotes primer tRNA(i)-Met annealing to the multipartite primer-binding site (PBS), dimerization of Ty3 RNA and initiation of reverse transcription. The aspartyl protease (PR) mediates the proteolytic cleavages of the Gag and Gag-Pol polyproteins after assembly of the VLP. In terms of biological role, reverse transcriptase/ribonuclease H (RT) is a multifunctional enzyme that catalyzes the conversion of the retro-elements RNA genome into dsDNA within the VLP. The enzyme displays a DNA polymerase activity that can copy either DNA or RNA templates, and a ribonuclease H (RNase H) activity that cleaves the RNA strand of RNA-DNA heteroduplexes during plus-strand synthesis and hydrolyzes RNA primers. The conversion leads to a linear dsDNA copy of the retrotransposon that includes long terminal repeats (LTRs) at both ends. Its function is as follows. Integrase (IN) targets the VLP to the nucleus, where a subparticle preintegration complex (PIC) containing at least integrase and the newly synthesized dsDNA copy of the retrotransposon must transit the nuclear membrane. Once in the nucleus, integrase performs the integration of the dsDNA into the host genome. This is Transposon Ty3-G Gag-Pol polyprotein (TY3B-G) from Saccharomyces cerevisiae (strain ATCC 204508 / S288c) (Baker's yeast).